The chain runs to 526 residues: Bifunctional purine biosynthesis protein PurH (526 aa).

The MGS-like domain occupies 1 to 149; it reads MLHSLPIRRA…KNHEAVTVVV (149 aa).

The protein belongs to the PurH family.

It carries out the reaction (6R)-10-formyltetrahydrofolate + 5-amino-1-(5-phospho-beta-D-ribosyl)imidazole-4-carboxamide = 5-formamido-1-(5-phospho-D-ribosyl)imidazole-4-carboxamide + (6S)-5,6,7,8-tetrahydrofolate. The enzyme catalyses IMP + H2O = 5-formamido-1-(5-phospho-D-ribosyl)imidazole-4-carboxamide. It participates in purine metabolism; IMP biosynthesis via de novo pathway; 5-formamido-1-(5-phospho-D-ribosyl)imidazole-4-carboxamide from 5-amino-1-(5-phospho-D-ribosyl)imidazole-4-carboxamide (10-formyl THF route): step 1/1. The protein operates within purine metabolism; IMP biosynthesis via de novo pathway; IMP from 5-formamido-1-(5-phospho-D-ribosyl)imidazole-4-carboxamide: step 1/1. The chain is Bifunctional purine biosynthesis protein PurH from Rhodospirillum rubrum (strain ATCC 11170 / ATH 1.1.1 / DSM 467 / LMG 4362 / NCIMB 8255 / S1).